The following is a 521-amino-acid chain: GMP synthase [glutamine-hydrolyzing] (521 aa).

The 196-residue stretch at 8–203 (KILILDFGAQ…VVDICGCQTL (196 aa)) folds into the Glutamine amidotransferase type-1 domain. The active-site Nucleophile is the Cys85. Catalysis depends on residues His177 and Glu179. One can recognise a GMPS ATP-PPase domain in the interval 204–396 (WTAANIIDDQ…LGLPRTMVYR (193 aa)). 231–237 (SGGVDSS) provides a ligand contact to ATP.

As to quaternary structure, homodimer.

It catalyses the reaction XMP + L-glutamine + ATP + H2O = GMP + L-glutamate + AMP + diphosphate + 2 H(+). It participates in purine metabolism; GMP biosynthesis; GMP from XMP (L-Gln route): step 1/1. Functionally, catalyzes the synthesis of GMP from XMP. The chain is GMP synthase [glutamine-hydrolyzing] from Xanthomonas oryzae pv. oryzae (strain PXO99A).